The sequence spans 248 residues: MSFVVIIPARYASTRLPGKPLVDINGKPMIVHVLERARESGAERIIVATDHDDVARAVEAAGGEVCMTRADHQSGTERLAEVVEKCAFSDDTVIVNVQGDEPMIPATIIRQVADNLAQRQVGMATLAVPIHNAEEAFNPNAVKVVLDAEGYALYFSRATIPWDRDRFAEGLETVGDNFLRHLGIYGYRAGFIRRYVNWQASPLEHIEMLEQLRVLWYGEKIHVAVAQEVPGTGVDTPEDLERVRAEMR.

It belongs to the KdsB family.

The protein localises to the cytoplasm. It carries out the reaction 3-deoxy-alpha-D-manno-oct-2-ulosonate + CTP = CMP-3-deoxy-beta-D-manno-octulosonate + diphosphate. The protein operates within nucleotide-sugar biosynthesis; CMP-3-deoxy-D-manno-octulosonate biosynthesis; CMP-3-deoxy-D-manno-octulosonate from 3-deoxy-D-manno-octulosonate and CTP: step 1/1. It functions in the pathway bacterial outer membrane biogenesis; lipopolysaccharide biosynthesis. Activates KDO (a required 8-carbon sugar) for incorporation into bacterial lipopolysaccharide in Gram-negative bacteria. The polypeptide is 3-deoxy-manno-octulosonate cytidylyltransferase (Shigella flexneri).